The following is a 427-amino-acid chain: Mitogen-activated protein kinase 8 (427 aa).

One can recognise a Protein kinase domain in the interval 26–321; that stretch reads YQNLKPIGSG…VDEALQHPYI (296 aa). Residues 32 to 40 and Lys-55 each bind ATP; that span reads IGSGAQGIV. An S-nitrosocysteine modification is found at Cys-116. The active-site Proton acceptor is Asp-151. At Thr-183 the chain carries Phosphothreonine; by MAP2K7. A TXY motif is present at residues 183 to 185; that stretch reads TPY. Phosphotyrosine; by MAP2K4 is present on Tyr-185. Phosphoserine is present on residues Met-301 and Ser-377. Positions 371–427 are disordered; sequence VIRGQPSPLGAAVINGSQHPSSSSSVNDVSSMSTDPTLASDTDSSLEAAAGPLGCCR. Positions 387-403 are enriched in low complexity; that stretch reads SQHPSSSSSVNDVSSMS. Residues 404 to 415 show a composition bias toward polar residues; the sequence is TDPTLASDTDSS.

Belongs to the protein kinase superfamily. CMGC Ser/Thr protein kinase family. MAP kinase subfamily. Forms a complex with MAPK8IP1 and ARHGEF28. Found in a complex with SH3RF1, RAC1, MAP3K11/MLK3, MAP2K7/MKK7 and MAPK8IP1/JIP1. Found in a complex with SH3RF1, RAC2, MAP3K7/TAK1, MAP2K7/MKK7, MAPK8IP1/JIP1 and MAPK9/JNK2. Binds to at least four scaffolding proteins, MAPK8IP1/JIP-1, MAPK8IP2/JIP-2, MAPK8IP3/JIP-3/JSAP1 and SPAG9/MAPK8IP4/JIP-4. These proteins also bind other components of the JNK signaling pathway. Interacts with TP53 and WWOX. Interacts with JAMP. Interacts with HSF1 (via D domain and preferentially with hyperphosphorylated form); this interaction occurs under both normal growth conditions and immediately upon heat shock. Interacts (phosphorylated form) with NFE2; the interaction phosphorylates NFE2 in undifferentiated cells. Interacts with NFATC4. Interacts with MECOM; regulates JNK signaling. Interacts with PIN1; this interaction mediates MAPK8 conformational changes leading to the binding of MAPK8 to its substrates. Interacts with GRIPAP1. Interacts with POU5F1; phosphorylates POU5F1 at 'Ser-355'. Interacts with STMN2, STMN3 and STMN4. Interacts with HSF4. The cofactor is Mg(2+). Post-translationally, dually phosphorylated on Thr-183 and Tyr-185 by MAP2K7 and MAP2K4, which activates the enzyme. Phosphorylated by TAOK2. May be phosphorylated at Thr-183 and Tyr-185 by MAP3K1/MEKK1. Phosphorylated form is more concentrated at synapses than none-phosphorylated.

The protein localises to the cytoplasm. It localises to the nucleus. Its subcellular location is the synapse. The enzyme catalyses L-seryl-[protein] + ATP = O-phospho-L-seryl-[protein] + ADP + H(+). The catalysed reaction is L-threonyl-[protein] + ATP = O-phospho-L-threonyl-[protein] + ADP + H(+). Its activity is regulated as follows. Activated by threonine and tyrosine phosphorylation by either of two dual specificity kinases, MAP2K4 and MAP2K7. MAP2K4 shows a strong preference for Tyr-185 while MAP2K7 phosphorylates Tyr-183 preferentially. Inhibited by dual specificity phosphatases, such as DUSP1. Inhibited by SERPINB3. In terms of biological role, serine/threonine-protein kinase involved in various processes such as cell proliferation, differentiation, migration, transformation and programmed cell death. Extracellular stimuli such as pro-inflammatory cytokines or physical stress stimulate the stress-activated protein kinase/c-Jun N-terminal kinase (SAP/JNK) signaling pathway. In this cascade, two dual specificity kinases MAP2K4/MKK4 and MAP2K7/MKK7 phosphorylate and activate MAPK8/JNK1. In turn, MAPK8/JNK1 phosphorylates a number of transcription factors, primarily components of AP-1 such as JUN, JDP2 and ATF2 and thus regulates AP-1 transcriptional activity. Phosphorylates the replication licensing factor CDT1, inhibiting the interaction between CDT1 and the histone H4 acetylase HBO1 to replication origins. Loss of this interaction abrogates the acetylation required for replication initiation. Promotes stressed cell apoptosis by phosphorylating key regulatory factors including p53/TP53 and Yes-associates protein YAP1. In T-cells, MAPK8 and MAPK9 are required for polarized differentiation of T-helper cells into Th1 cells. Contributes to the survival of erythroid cells by phosphorylating the antagonist of cell death BAD upon EPO stimulation. Mediates starvation-induced BCL2 phosphorylation, BCL2 dissociation from BECN1, and thus activation of autophagy. Phosphorylates STMN2 and hence regulates microtubule dynamics, controlling neurite elongation in cortical neurons. In the developing brain, through its cytoplasmic activity on STMN2, negatively regulates the rate of exit from multipolar stage and of radial migration from the ventricular zone. Phosphorylates several other substrates including heat shock factor protein 4 (HSF4), the deacetylase SIRT1, ELK1, or the E3 ligase ITCH. Phosphorylates the CLOCK-BMAL1 heterodimer and plays a role in the regulation of the circadian clock. Phosphorylates the heat shock transcription factor HSF1, suppressing HSF1-induced transcriptional activity. Phosphorylates POU5F1, which results in the inhibition of POU5F1's transcriptional activity and enhances its proteasomal degradation. Phosphorylates JUND and this phosphorylation is inhibited in the presence of MEN1. In neurons, phosphorylates SYT4 which captures neuronal dense core vesicles at synapses. Phosphorylates EIF4ENIF1/4-ET in response to oxidative stress, promoting P-body assembly. Phosphorylates SIRT6 in response to oxidative stress, stimulating its mono-ADP-ribosyltransferase activity. Phosphorylates NLRP3, promoting assembly of the NLRP3 inflammasome. Phosphorylates ALKBH5 in response to reactive oxygen species (ROS), promoting ALKBH5 sumoylation and inactivation. JNK1 isoforms display different binding patterns: beta-1 preferentially binds to c-Jun, whereas alpha-1, alpha-2, and beta-2 have a similar low level of binding to both c-Jun or ATF2. However, there is no correlation between binding and phosphorylation, which is achieved at about the same efficiency by all isoforms. The polypeptide is Mitogen-activated protein kinase 8 (MAPK8) (Homo sapiens (Human)).